The chain runs to 504 residues: 2-isopropylmalate synthase (504 aa).

The region spanning 6-267 (IIIFDTTLRD…YTGIISKEIY (262 aa)) is the Pyruvate carboxyltransferase domain. 4 residues coordinate Mn(2+): Asp15, His201, His203, and Asn237. The tract at residues 391-504 (EITDLLQSSG…LNSYLRIHKN (114 aa)) is regulatory domain.

This sequence belongs to the alpha-IPM synthase/homocitrate synthase family. LeuA type 1 subfamily. Homodimer. It depends on Mn(2+) as a cofactor.

The protein localises to the cytoplasm. It catalyses the reaction 3-methyl-2-oxobutanoate + acetyl-CoA + H2O = (2S)-2-isopropylmalate + CoA + H(+). It participates in amino-acid biosynthesis; L-leucine biosynthesis; L-leucine from 3-methyl-2-oxobutanoate: step 1/4. In terms of biological role, catalyzes the condensation of the acetyl group of acetyl-CoA with 3-methyl-2-oxobutanoate (2-ketoisovalerate) to form 3-carboxy-3-hydroxy-4-methylpentanoate (2-isopropylmalate). This Campylobacter concisus (strain 13826) protein is 2-isopropylmalate synthase.